We begin with the raw amino-acid sequence, 189 residues long: Peptidyl-tRNA hydrolase (189 aa).

Y14 serves as a coordination point for tRNA. Catalysis depends on H19, which acts as the Proton acceptor. Positions 64, 66, and 112 each coordinate tRNA.

This sequence belongs to the PTH family. As to quaternary structure, monomer.

Its subcellular location is the cytoplasm. The catalysed reaction is an N-acyl-L-alpha-aminoacyl-tRNA + H2O = an N-acyl-L-amino acid + a tRNA + H(+). In terms of biological role, hydrolyzes ribosome-free peptidyl-tRNAs (with 1 or more amino acids incorporated), which drop off the ribosome during protein synthesis, or as a result of ribosome stalling. Catalyzes the release of premature peptidyl moieties from peptidyl-tRNA molecules trapped in stalled 50S ribosomal subunits, and thus maintains levels of free tRNAs and 50S ribosomes. This Dehalococcoides mccartyi (strain ATCC BAA-2266 / KCTC 15142 / 195) (Dehalococcoides ethenogenes (strain 195)) protein is Peptidyl-tRNA hydrolase.